Here is a 200-residue protein sequence, read N- to C-terminus: Shikimate kinase (200 aa).

33–38 lines the ATP pocket; sequence GAGKST. Residue Ser-37 coordinates Mg(2+). Substrate contacts are provided by Asp-55, Arg-79, and Gly-101. Arg-139 contributes to the ATP binding site. Arg-158 serves as a coordination point for substrate.

Belongs to the shikimate kinase family. In terms of assembly, monomer. The cofactor is Mg(2+).

The protein localises to the cytoplasm. The catalysed reaction is shikimate + ATP = 3-phosphoshikimate + ADP + H(+). It participates in metabolic intermediate biosynthesis; chorismate biosynthesis; chorismate from D-erythrose 4-phosphate and phosphoenolpyruvate: step 5/7. Catalyzes the specific phosphorylation of the 3-hydroxyl group of shikimic acid using ATP as a cosubstrate. The chain is Shikimate kinase from Brucella abortus (strain S19).